Consider the following 347-residue polypeptide: Trace amine-associated receptor 4 (347 aa).

The Extracellular segment spans residues 1–37; that stretch reads MNSPDLWYSPETQFCFAAANNSCPRKARPALVVCAMY. Residue N20 is glycosylated (N-linked (GlcNAc...) asparagine). 2 disulfides stabilise this stretch: C23–C187 and C106–C191. The helical transmembrane segment at 38–58 threads the bilayer; that stretch reads LVMIGAIVMTMLGNMVVIISI. The Cytoplasmic portion of the chain corresponds to 59–69; the sequence is AHFKQLHSPTN. A helical membrane pass occupies residues 70–90; the sequence is FLILSMATTDFLLSCVVMPFS. Topologically, residues 91-110 are extracellular; the sequence is MVRSIESCWYFGDLFCKVHS. The helical transmembrane segment at 111–129 threads the bilayer; it reads CCDIMLCTTSIFHLCFISV. The Cytoplasmic segment spans residues 130–149; sequence DRHYAVCDPLHYVTQITVGV. Residues 150 to 170 traverse the membrane as a helical segment; it reads VGVFLLISWSVPILFAFGLVF. At 171–197 the chain is on the extracellular side; sequence SELNLIGAEDFVAAIDCTGLCVLIFNK. The segment at 175-188 is extracellular Loop 2 (ECL2); sequence LIGAEDFVAAIDCT. A helical transmembrane segment spans residues 198–218; that stretch reads LWGVLASFIAFFLPGAIMVGI. Topologically, residues 219–260 are cytoplasmic; sequence YIHIFTVARKHARKIGPGPRTKRALSESKMKATSGKESKATK. The helical transmembrane segment at 261 to 281 threads the bilayer; that stretch reads TLSIVMGVFVLCWLPFFVLTI. Residues 282 to 296 are Extracellular-facing; that stretch reads TDPFIGFTTPEDLYN. A helical membrane pass occupies residues 297 to 317; it reads VFLWLGYFNSTFNPIIYGMFY. Residues 318–347 lie on the Cytoplasmic side of the membrane; sequence PWFRKALRMIVTGTIFRSDSSTSSLHPAHP.

Belongs to the G-protein coupled receptor 1 family.

It localises to the cell membrane. Functionally, olfactory receptor specific for 2-phenylethylamine, a trace amine present at high concentration in the urine of carnivore species, playing a key role in fear and avoidance responses. 2-phenylethylamine acts as a kairomone in the chemical detection of carnivore odor and triggers fear in rats. This receptor is probably mediated by the G(s)-class of G-proteins which activate adenylate cyclase. The protein is Trace amine-associated receptor 4 of Rattus norvegicus (Rat).